A 365-amino-acid polypeptide reads, in one-letter code: Regulatory protein RapG (365 aa).

TPR repeat units lie at residues 135-168 (GKLYYKLGQNIVSLNHTRQAVKTFREETDYKKKL), 169-202 (ASALITMSGNFTEMSQFEEAEAYLDEAIRITSEL), 209-242 (AQLLHNFGLLHAQSGKSEEAVSKLEEALQNDEYA), 244-284 (SAYY…EPNR), and 326-359 (RELSILAGERYRELELYKEAAHFFYEALQIEELI).

The protein belongs to the Rap family.

The protein localises to the cytoplasm. Inhibited by PhrG. Involved in the regulation of expression of DegU-controlled genes. Inhibits the binding of DegU to the promoter regions of aprE, coding for an extracellular alkaline protease, and comK, a master regulator for development of genetic competence. RapG does not stimulate dephosphorylation of DegU-P. This Bacillus subtilis (strain 168) protein is Regulatory protein RapG (rapG).